We begin with the raw amino-acid sequence, 390 residues long: ATP-sensitive inward rectifier potassium channel 11 (390 aa).

The Cytoplasmic segment spans residues 1 to 65; the sequence is MLSRKGIIPE…LQDVFTTLVD (65 aa). 2 residues coordinate ATP: Asn48 and Arg50. The chain crosses the membrane as a helical span at residues 66-92; sequence LKWPHTLLIFTMSFLCSWLLFAMVWWL. The Extracellular portion of the chain corresponds to 93–116; the sequence is IAFAHGDLAPGEGTTVPCVTSIHS. Cys110 and Cys142 are joined by a disulfide. Residues 117–133 constitute an intramembrane region (discontinuously helical; Pore-forming); the sequence is FSSAFLFSIEVQVTIGF. Positions 130 and 133 each coordinate K(+). The Selectivity filter motif lies at 130-135; the sequence is TIGFGG. Topologically, residues 134–142 are extracellular; it reads GGRMVTEEC. The chain crosses the membrane as a helical span at residues 143–171; it reads PLAILILIVQNIVGLMINAIMLGCIFMKT. The Cytoplasmic segment spans residues 172 to 390; it reads SQAHRRAETL…RFSISPDSLS (219 aa). A 1,2-diacyl-sn-glycero-3-phospho-(1D-myo-inositol-4,5-bisphosphate) is bound at residue Arg176. Residue Tyr330 coordinates ATP. Thr341 bears the Phosphothreonine; by MAPK1 mark. Ser385 is modified (phosphoserine; by MAPK1).

It belongs to the inward rectifier-type potassium channel (TC 1.A.2.1) family. KCNJ11 subfamily. As to quaternary structure, homotetramer; the homotetramer binds four ATP molecules (one ATP per subunit). Forms an heterooctamer with ABCC8/SUR1; one KCNJ11 homotetramer interacts with four ABCC8/SUR1 molecules. Interacts with ABCC9/SUR2. Post-translationally, phosphorylation by MAPK1 results in changes in channel gating that destabilize the closed states and reduce the ATP sensitivity.

It localises to the membrane. The catalysed reaction is K(+)(in) = K(+)(out). Its activity is regulated as follows. KATP channels are regulated by cytoplasmic ATP/ADP ratios; ATP inhibits the channel by closing the pore, while ADP activates the channel. Activated by phosphatidylinositol 4,5-biphosphate (PtdIns(4,5)P2). Functionally, inward rectifier potassium channel that forms the pore of ATP-sensitive potassium channels (KATP), regulating potassium permeability as a function of cytoplasmic ATP and ADP concentrations in many different cells. Inward rectifier potassium channels are characterized by a greater tendency to allow potassium to flow into the cell rather than out of it. Their voltage dependence is regulated by the concentration of extracellular potassium; as external potassium is raised, the voltage range of the channel opening shifts to more positive voltages. The inward rectification is mainly due to the blockage of outward current by internal magnesium. Can be blocked by extracellular barium. In pancreatic cells, it forms KATP channels with ABCC8/SUR1. Can form cardiac and smooth muscle-type KATP channels with ABCC9. This Cavia porcellus (Guinea pig) protein is ATP-sensitive inward rectifier potassium channel 11 (KCNJ11).